The following is a 119-amino-acid chain: Large ribosomal subunit protein uL18 (119 aa).

Belongs to the universal ribosomal protein uL18 family. As to quaternary structure, part of the 50S ribosomal subunit; part of the 5S rRNA/L5/L18/L25 subcomplex. Contacts the 5S and 23S rRNAs.

This is one of the proteins that bind and probably mediate the attachment of the 5S RNA into the large ribosomal subunit, where it forms part of the central protuberance. In Nitratidesulfovibrio vulgaris (strain DSM 19637 / Miyazaki F) (Desulfovibrio vulgaris), this protein is Large ribosomal subunit protein uL18.